The following is a 406-amino-acid chain: B3 domain-containing protein Os11g0197600 (406 aa).

The tract at residues 1–20 is disordered; the sequence is MVVREKQGGRMGKGKGKGKE. A DNA-binding region (TF-B3 1) is located at residues 30 to 123; the sequence is RSFFRVLLTL…QFSVTVFEPS (94 aa). The interval 199–245 is disordered; it reads ESSRRKRAGASAGKSKVTSTSHNSTRGSSCSSDEDNSSSKSPNPPFL. Polar residues predominate over residues 214 to 225; that stretch reads KVTSTSHNSTRG. The TF-B3 2 DNA-binding region spans 298–393; that stretch reads AVQIMMESYV…NIKVHIYRVV (96 aa).

Its subcellular location is the nucleus. This chain is B3 domain-containing protein Os11g0197600, found in Oryza sativa subsp. japonica (Rice).